The following is a 132-amino-acid chain: Holo-[acyl-carrier-protein] synthase (132 aa).

The Mg(2+) site is built by aspartate 8 and glutamate 57.

This sequence belongs to the P-Pant transferase superfamily. AcpS family. Mg(2+) is required as a cofactor.

It localises to the cytoplasm. It carries out the reaction apo-[ACP] + CoA = holo-[ACP] + adenosine 3',5'-bisphosphate + H(+). Transfers the 4'-phosphopantetheine moiety from coenzyme A to a Ser of acyl-carrier-protein. The polypeptide is Holo-[acyl-carrier-protein] synthase (Methylobacterium nodulans (strain LMG 21967 / CNCM I-2342 / ORS 2060)).